Reading from the N-terminus, the 193-residue chain is AP-3 complex subunit sigma-2 (193 aa).

Belongs to the adaptor complexes small subunit family. In terms of assembly, adaptor protein complex 3 (AP-3) is a heterotetramer composed of two large adaptins (delta-type subunit AP3D1 and beta-type subunit AP3B1 or AP3B2), a medium adaptin (mu-type subunit AP3M1 or AP3M2) and a small adaptin (sigma-type subunit APS1 or AP3S2). Interacts with AGAP1. AP-3 associates with the BLOC-1 complex.

The protein resides in the golgi apparatus. The protein localises to the cytoplasmic vesicle membrane. Its function is as follows. Part of the AP-3 complex, an adaptor-related complex which is not clathrin-associated. The complex is associated with the Golgi region as well as more peripheral structures. It facilitates the budding of vesicles from the Golgi membrane and may be directly involved in trafficking to lysosomes. In concert with the BLOC-1 complex, AP-3 is required to target cargos into vesicles assembled at cell bodies for delivery into neurites and nerve terminals. This chain is AP-3 complex subunit sigma-2 (AP3S2), found in Bos taurus (Bovine).